Here is a 575-residue protein sequence, read N- to C-terminus: Preterminal protein (575 aa).

Positions 309 to 318 match the Nuclear localization signal motif; it reads RLPRVTRRRR. The disordered stretch occupies residues 314–340; sequence TRRRRRPPSPAPPPEEIEEAAMEVEEP. The span at 328-340 shows a compositional bias: acidic residues; it reads EEIEEAAMEVEEP. An O-(5'-phospho-DNA)-serine modification is found at serine 510.

The protein belongs to the adenoviridae terminal protein family. Heterodimer with the polymerase; this heterodimer binds to bp 9 to 18 of the genome. Interacts with host POU2F1; POU2F1 binds to the auxiliary sequences in the inverted terminal repeats and tethers the pTP-POL heterodimer to the origin DNA thereby participating in the assembly of the pre-initiation complex (POL-TP-DBP-NFIA-POU2F1). In terms of processing, preterminal protein is used to replicate viral genome, upon genomic encapsidation it is processed first into iTP and finally into TP by adenovirus protease.

It localises to the host nucleus matrix. In terms of biological role, protein covalently bound to the viral DNA that acts as a primer for viral genomic replication by DNA strand displacement. Assembles on the viral origin of replication in an initiation complex with viral polymerase, DBP, host NFIA and host POU2F1/OCT1. During initiation, the polymerase covalently couples the first dCTP with Ser-580 of pTP. The terminal protein stimulates the template activity over 20 fold compared to protein-free templates. Neo-synthesized viral genomes are linked to two preterminal proteins, one for each 5' end. These new genomes are encapsidated in the nucleus, and during capsid maturation by viral protease, preterminal protein is first cleaved into intermediary (iTP), then into mature TP. May play a role in host nuclear matrix localization of genomic DNA. The protein is Preterminal protein of Fowl adenovirus A serotype 1 (strain CELO / Phelps) (FAdV-1).